The sequence spans 907 residues: Protein translocase subunit SecA (907 aa).

Residues Q87, 105-109, and D513 contribute to the ATP site; that span reads GEGKT. Residues 841–853 show a composition bias toward basic and acidic residues; the sequence is EAQRRAQAEEAAR. A disordered region spans residues 841-907; the sequence is EAQRRAQAEE…KYKQCHGQIN (67 aa). A compositionally biased stretch (low complexity) spans 854–865; the sequence is RAQAQHASAQSQ. Residues 872 to 887 are compositionally biased toward basic and acidic residues; it reads EGHHQPVVRDERKVGR. Zn(2+) contacts are provided by C891, C893, C902, and H903.

Belongs to the SecA family. Monomer and homodimer. Part of the essential Sec protein translocation apparatus which comprises SecA, SecYEG and auxiliary proteins SecDF-YajC and YidC. Zn(2+) serves as cofactor.

The protein localises to the cell inner membrane. The protein resides in the cytoplasm. The enzyme catalyses ATP + H2O + cellular proteinSide 1 = ADP + phosphate + cellular proteinSide 2.. Part of the Sec protein translocase complex. Interacts with the SecYEG preprotein conducting channel. Has a central role in coupling the hydrolysis of ATP to the transfer of proteins into and across the cell membrane, serving both as a receptor for the preprotein-SecB complex and as an ATP-driven molecular motor driving the stepwise translocation of polypeptide chains across the membrane. The sequence is that of Protein translocase subunit SecA from Vibrio vulnificus (strain YJ016).